The sequence spans 872 residues: Probable GPI-anchored adhesin-like protein PGA25 (872 aa).

Positions 1-19 (MKVTAVSSVLLTVAALTNA) are cleaved as a signal peptide. Low complexity predominate over residues 43 to 65 (PAAAPAAQPAAQPTTQSPADQPT). 3 disordered regions span residues 43 to 383 (PAAA…TIIP), 492 to 517 (KPTG…DETD), and 623 to 809 (PDDW…ECDT). Positions 66–83 (VQSPVSSDQPSTAQPVAQ) are enriched in polar residues. 2 stretches are compositionally biased toward low complexity: residues 84-110 (NNLL…TRST) and 125-171 (SSEA…SSSS). A glycan (N-linked (GlcNAc...) asparagine) is linked at Asn-92. Acidic residues predominate over residues 196–207 (ETDDEDCVEETE). Composition is skewed to low complexity over residues 208–225 (SPTS…VATT), 242–260 (SSAP…SSTT), and 274–293 (SSVP…NTTT). Residue Asn-290 is glycosylated (N-linked (GlcNAc...) asparagine). Over residues 317 to 328 (AEEDDEECEDPT) the composition is skewed to acidic residues. The span at 349–363 (TSQSKTSVSSVVSKS) shows a compositional bias: low complexity. The span at 366–376 (EDDDDETECET) shows a compositional bias: acidic residues. The segment covering 495–506 (GSGSITVLPTKS) has biased composition (polar residues). 2 stretches are compositionally biased toward acidic residues: residues 624–635 (DDWEDDGYEGED) and 646–659 (DDGE…DDGE). 3 stretches are compositionally biased toward gly residues: residues 666 to 692 (SSSG…GSGS), 701 to 710 (SSGGTWGGSG), and 731 to 740 (SWWGGSGSGS). Low complexity predominate over residues 741–760 (SSGSSSGVSSGDSGSSSVTG). Residues 761–771 (GSSGSWWGGSG) are compositionally biased toward gly residues. Positions 780–808 (DGYDDEDDQTPEPECDDEDDSWDDDEECD) are enriched in acidic residues. A lipid anchor (GPI-anchor amidated alanine) is attached at Ala-845. A propeptide spans 846–872 (QSVTQIENIGGKVSASGLFVVLGLLLI) (removed in mature form).

Belongs to the HYR1/IFF family. Post-translationally, the GPI-anchor is attached to the protein in the endoplasmic reticulum and serves to target the protein to the cell surface. There, the glucosamine-inositol phospholipid moiety is cleaved off and the GPI-modified mannoprotein is covalently attached via its lipidless GPI glycan remnant to the 1,6-beta-glucan of the outer cell wall layer.

It localises to the secreted. The protein localises to the cell wall. The protein resides in the membrane. Probable GPI-anchored cell wall protein involved in cell wall organization, hyphal growth, as well as in host-fungal interaction and virulence. The sequence is that of Probable GPI-anchored adhesin-like protein PGA25 (PGA25) from Candida albicans (strain SC5314 / ATCC MYA-2876) (Yeast).